The sequence spans 872 residues: Alanine--tRNA ligase (872 aa).

Zn(2+) contacts are provided by H567, H571, C669, and H673.

It belongs to the class-II aminoacyl-tRNA synthetase family. Zn(2+) is required as a cofactor.

The protein resides in the cytoplasm. It catalyses the reaction tRNA(Ala) + L-alanine + ATP = L-alanyl-tRNA(Ala) + AMP + diphosphate. Its function is as follows. Catalyzes the attachment of alanine to tRNA(Ala) in a two-step reaction: alanine is first activated by ATP to form Ala-AMP and then transferred to the acceptor end of tRNA(Ala). Also edits incorrectly charged Ser-tRNA(Ala) and Gly-tRNA(Ala) via its editing domain. This Streptococcus thermophilus (strain CNRZ 1066) protein is Alanine--tRNA ligase.